The primary structure comprises 395 residues: GPI-anchor transamidase (395 aa).

The first 27 residues, 1–27, serve as a signal peptide directing secretion; the sequence is MAVTDSLSRAATVLATVLLLSFGSVAA. Over 28-368 the chain is Lumenal; that stretch reads SHIEDQAEQF…PKLKDWHPPG (341 aa). Residues Asp-79, Ile-82, Glu-118, and Asp-120 each contribute to the Ca(2+) site. His-164 functions as the Proton donor in the catalytic mechanism. The Nucleophile; acyl-thioester intermediate role is filled by Cys-206. A protein is bound by residues Cys-206, Ser-232, and Ser-234. Residues 231 to 236 are autoinhibitory loop; it reads DSLSHQ. Cys-275 and Cys-280 form a disulfide bridge. The helical transmembrane segment at 369–385 threads the bilayer; that stretch reads GFILGLWALIIMVFFKT. Residues 386 to 395 are Cytoplasmic-facing; that stretch reads YGIKHMKFIF.

It belongs to the peptidase C13 family. Heteropentamer. Part of the GPI-anchor transamidase complex, consisting of PIGK, PIGT, PIGS, PIGU and GAA1. Interacts with GPAA1. Interacts with PIGT; this interaction, via a disulfide link, stabilizes the expression of GAA1 and PIGK and links them to PIGS. Post-translationally, the disulfide bond between PIGK/GPI8 and PIGT is important for normal enzyme activity.

The protein localises to the endoplasmic reticulum membrane. It participates in glycolipid biosynthesis; glycosylphosphatidylinositol-anchor biosynthesis. Its activity is regulated as follows. In the absence of proproteins substrates, exists in an inactive state with a disrupted catalytic site by an autoinhibitory loop. The binding of proprotein substrates, particularly the CSP region, to GPI-T triggers concerted conformational changes that alleviate the inhibition by the autoinhibitory loop. Meanwhile, proprotein residues near the omega- site induce the formation of a catalytic cleft for catalysis, following which the products are released and GPI-T reverts to the inactive state. Functionally, catalytic subunit of the glycosylphosphatidylinositol-anchor (GPI-anchor) transamidase (GPI-T) complex that catalyzes the formation of the linkage between a proprotein and a GPI-anchor and participates in GPI anchored protein biosynthesis. Recognizes diverse proproteins at a C-terminal signal peptide (CSP) region that lacks consensus sequence and replaces it with a GPI-anchor via a transamidation reaction. Transamidation catalysis reaction follows a two-phase mechanism. In the acyl-enzyme phase, the carbonyl group of the proproteins's omega-site undergoes a nucleophilic attack forming an enzyme-substrate thioester bond. Followed by a general acid catalysis that allows CSP releasing, regenerating the carbonyl, and forming the acyl-enzyme intermediate. In the GPI-anchor attachment phase, the amino group of the GPI-anchor's ethanolamine phosphate, the one on third mannose (EtNP3), mediates a nucleophilic attack on the carbonyl of the acyl-enzyme intermediate, replacing the CSP, allowing GPI-anchor attachment to the omega-residue, therefore forming the product and freeing the enzyme. The sequence is that of GPI-anchor transamidase from Homo sapiens (Human).